Consider the following 915-residue polypeptide: Alanine--tRNA ligase (915 aa).

His-605, His-609, Cys-709, and His-713 together coordinate Zn(2+). The segment at 882–901 is disordered; it reads GGGGDERLAQGGGRNPDGLT.

This sequence belongs to the class-II aminoacyl-tRNA synthetase family. It depends on Zn(2+) as a cofactor.

The protein localises to the cytoplasm. The catalysed reaction is tRNA(Ala) + L-alanine + ATP = L-alanyl-tRNA(Ala) + AMP + diphosphate. Its function is as follows. Catalyzes the attachment of alanine to tRNA(Ala) in a two-step reaction: alanine is first activated by ATP to form Ala-AMP and then transferred to the acceptor end of tRNA(Ala). Also edits incorrectly charged Ser-tRNA(Ala) and Gly-tRNA(Ala) via its editing domain. This is Alanine--tRNA ligase from Methanopyrus kandleri (strain AV19 / DSM 6324 / JCM 9639 / NBRC 100938).